Here is a 349-residue protein sequence, read N- to C-terminus: MAGKKVCIVGSGNWGSAIAKIVGSNASQLAHFDPRVTMWVFEEDIGGRKLTEIINTQHENVKYLPGHKLPPNVVAVPDVVQAATGADILVFVVPHQFIGKICDQLKGHLKANTIGISLIKGIDEGPNGLKLISEVIGESLGIPMSVLMGANIASEVAEEKFCETTIGCKDPAQGQLLKELMQTPNFRITVVQEVDTVEICGALKNIVAVGAGFCDGLGFGDNTKAAVIRLGLMEMIAFAKLFCSGSVSSATFLESCGVADLITTCYGGRNRKVAEAFARTGKSIEQLEKEMLNGQKLQGPQTARELHSILQHKGLVDKFPLFTAVYKVCYEGQPVGEFICCLQNHPEHM.

10 to 15 (GSGNWG) is a binding site for NAD(+). Residue Lys-120 coordinates substrate. Position 153 (Ala-153) interacts with NAD(+). Ser-154 carries the post-translational modification Phosphoserine. Lys-204 functions as the Proton acceptor in the catalytic mechanism. Arg-269 provides a ligand contact to NAD(+). 269–270 (RN) contributes to the substrate binding site. At Lys-289 the chain carries N6-succinyllysine. NAD(+)-binding residues include Lys-296 and Gln-298. Tyr-326 is modified (phosphotyrosine).

The protein belongs to the NAD-dependent glycerol-3-phosphate dehydrogenase family. Homodimer.

The protein localises to the cytoplasm. The enzyme catalyses sn-glycerol 3-phosphate + NAD(+) = dihydroxyacetone phosphate + NADH + H(+). Functionally, has glycerol-3-phosphate dehydrogenase activity. The protein is Glycerol-3-phosphate dehydrogenase [NAD(+)], cytoplasmic of Rattus norvegicus (Rat).